We begin with the raw amino-acid sequence, 483 residues long: Protein hedgehog (483 aa).

The first 19 residues, Met1–Ser19, serve as a signal peptide directing secretion. A propeptide spanning residues Leu20 to Ser92 is cleaved from the precursor. The segment at Glu28–Ala57 is disordered. Residues Ser41 to Asn50 show a composition bias toward low complexity. The N-palmitoyl cysteine moiety is linked to residue Cys93. The Ca(2+) site is built by Glu157, Glu158, Asp163, Thr193, Glu194, Asp197, and Asp199. A lipid anchor (Cholesterol glycine ester) is attached at Gly266.

The protein belongs to the hedgehog family. In terms of assembly, interacts with shf. In terms of processing, the C-terminal part of the hedgehog protein precursor displays an autoproteolysis activity that results in the cleavage of the full-length protein into two parts (N-product and C-product). In addition, the C-terminal part displays a cholesterol transferase activity that results by the covalent attachment of a cholesterol moiety to the C-terminal of the newly generated N-product. The N-product is the active species in both local and long-range signaling, whereas the C-product has no signaling activity. Post-translationally, cholesterylation is required for N-product targeting to lipid rafts and multimerization. N-palmitoylation by Rasp of the hedgehog N-product, within the secretory pathway, is required for the embryonic and larval patterning activities of the hedgehog signal.

The protein localises to the nucleus. The protein resides in the cytoplasm. It is found in the cell membrane. It catalyses the reaction glycyl-L-cysteinyl-[protein] + cholesterol + H(+) = [protein]-C-terminal glycyl cholesterol ester + N-terminal L-cysteinyl-[protein]. Functionally, the C-terminal part of the hedgehog protein precursor displays an autoproteolysis activity that results in the cleavage of the full-length protein into two parts (N-product and C-product). In addition, the C-terminal part displays a cholesterol transferase activity that results by the covalent attachment of a cholesterol moiety to the C-terminal of the newly generated N-product. Once cleaved, the C-product has no signaling activity and diffuses from the cell. Its function is as follows. The dually lipidated hedgehog protein N-product is a morphogen which is essential for a variety of patterning events during development. Establishes the anterior-posterior axis of the embryonic segments and patterns the larval imaginal disks. Binds to the patched (ptc) receptor, which functions in association with smoothened (smo), to activate the transcription of target genes wingless (wg), decapentaplegic (dpp) and ptc. In the absence of hh, ptc represses the constitutive signaling activity of smo through fused (fu). Essential component of a signaling pathway which regulates the Duox-dependent gut immune response to bacterial uracil; required to activate Cad99C-dependent endosome formation, norpA-dependent Ca2+ mobilization and p38 MAPK, which are essential steps in the Duox-dependent production of reactive oxygen species (ROS) in response to intestinal bacterial infection. During photoreceptor differentiation, it up-regulates transcription of Ubr3, which in turn promotes the hh-signaling pathway by mediating the ubiquitination and degradation of cos. In Drosophila virilis (Fruit fly), this protein is Protein hedgehog.